A 91-amino-acid chain; its full sequence is Putative defensin-like protein 221 (91 aa).

The first 19 residues, 1–19 (MKTLFFFLTIAVLVSSCTS), serve as a signal peptide directing secretion. 3 cysteine pairs are disulfide-bonded: cysteine 61–cysteine 78, cysteine 64–cysteine 83, and cysteine 68–cysteine 85.

Belongs to the DEFL family.

It localises to the secreted. This Arabidopsis thaliana (Mouse-ear cress) protein is Putative defensin-like protein 221.